The following is a 3461-amino-acid chain: Reelin (3461 aa).

A signal peptide spans 1-26 (MERGCWAPRALVLAVLLLLATLRARA). The region spanning 27-191 (ATGYYPRFSP…GAPTEATAYS (165 aa)) is the Reelin domain. A disulfide bridge connects residues Cys41 and Cys127. An N-linked (GlcNAc...) asparagine glycan is attached at Asn141. Residues Cys155 and Cys179 are joined by a disulfide bond. N-linked (GlcNAc...) asparagine glycans are attached at residues Asn258, Asn290, and Asn306. Cys540 and Cys581 are disulfide-bonded. Residues 593–604 (EFSTNHGRSWSL) form a BNR 1 repeat. A disulfide bond links Cys609 and Cys614. Asn629 is a glycosylation site (N-linked (GlcNAc...) asparagine). The 32-residue stretch at 671–702 (IGPSCLKFCSGRGQCTRHGCKCDPGFSGPACE) folds into the EGF-like 1 domain. 2 disulfides stabilise this stretch: Cys675–Cys685 and Cys692–Cys701. The stretch at 799-810 (HYSYDNGITWKL) is one BNR 2 repeat. An intrachain disulfide couples Cys895 to Cys937. The stretch at 952–963 (EYSANHGLTWHL) is one BNR 3 repeat. Cystine bridges form between Cys968/Cys975, Cys1034/Cys1044, and Cys1051/Cys1060. An EGF-like 2 domain is found at 1030-1061 (IGQQCPNMCSGHGSCDHGVCRCDQGYQGTECH). The BNR 4 repeat unit spans residues 1157-1168 (QYSNNGGIQWHL). A glycan (N-linked (GlcNAc...) asparagine) is linked at Asn1267. A BNR 5 repeat occupies 1323-1334 (QYSHDAGMSWFL). Disulfide bonds link Cys1339-Cys1348, Cys1413-Cys1423, Cys1417-Cys1428, and Cys1430-Cys1441. The EGF-like 3 domain occupies 1409–1442 (ISEPCPSYCSGHGDCISGVCFCDLGYTAAQGTCV). Asn1447 carries an N-linked (GlcNAc...) asparagine glycan. The cysteines at positions 1475 and 1522 are disulfide-linked. A BNR 6 repeat occupies 1535–1546 (QYSNDNGILWHL). The N-linked (GlcNAc...) asparagine glycan is linked to Asn1600. Residues Cys1633 and Cys1673 are joined by a disulfide bond. One copy of the BNR 7 repeat lies at 1686–1697 (QYSLNNGKDWQL). A disulfide bridge links Cys1702 with Cys1709. The N-linked (GlcNAc...) asparagine glycan is linked to Asn1750. The 32-residue stretch at 1765–1796 (LASGCPWMCSGRGICDSGRCVCDRGFGGPFCV) folds into the EGF-like 4 domain. The stretch at 1884–1895 (QFSVSGGVTWHL) is one BNR 8 repeat. Residue Asn1921 is glycosylated (N-linked (GlcNAc...) asparagine). Cysteines 1983 and 2030 form a disulfide. Residues 2043-2054 (EFSRDFGATWHL) form a BNR 9 repeat. Residues Cys2059 and Cys2070 are joined by a disulfide bond. Residues His2061 and His2074 each coordinate Zn(2+). An EGF-like 5 domain is found at 2129–2161 (IGPQCEEMCYGHGSCINGTKCICDPGYSGPTCK). 3 cysteine pairs are disulfide-bonded: Cys2133-Cys2143, Cys2137-Cys2149, and Cys2151-Cys2160. Asn2145 is a glycosylation site (N-linked (GlcNAc...) asparagine). Residue Glu2179 coordinates Zn(2+). Cys2195 and Cys2235 are disulfide-bonded. The BNR 10 repeat unit spans residues 2250–2261 (QYSLNGGLSWSL). Glu2264 provides a ligand contact to Zn(2+). 2 N-linked (GlcNAc...) asparagine glycosylation sites follow: Asn2269 and Asn2317. Disulfide bonds link Cys2348–Cys2387, Cys2393–Cys2559, Cys2482–Cys2492, Cys2486–Cys2497, Cys2499–Cys2508, and Cys2544–Cys2584. Residues Glu2397, Glu2399, and His2460 each coordinate Zn(2+). The BNR 11 repeat unit spans residues 2399–2410 (EYSVDLGLSWHP). The EGF-like 6 domain occupies 2478–2509 (IGDGCLDMCSGHGRCVQGSCVCDEQWGGLYCD). Asn2569 carries an N-linked (GlcNAc...) asparagine glycan. BNR repeat units follow at residues 2598–2609 (EYSVNGGITWNL) and 2778–2789 (QFSTDFGVSWSY). A disulfide bridge connects residues Cys2794 and Cys2801. The EGF-like 7 domain occupies 2853–2884 (LGPGCLDNCGGHGDCLKEQCICDPGYSGPNCY). A disulfide bond links Cys2919 and Cys2966. The N-linked (GlcNAc...) asparagine glycan is linked to Asn2962. A BNR 14 repeat occupies 2979 to 2990 (DFSTDGGITWTL). 2 N-linked (GlcNAc...) asparagine glycosylation sites follow: Asn3016 and Asn3073. The stretch at 3143-3155 (EYTKDARSDSWQL) is one BNR 15 repeat. A disulfide bond links Cys3160 and Cys3170. A glycan (N-linked (GlcNAc...) asparagine) is linked at Asn3185. The EGF-like 8 domain maps to 3228–3260 (IGEACPKLCSGHGYCTTGAVCICDESFQGDDCS). 4 disulfide bridges follow: Cys3232–Cys3242, Cys3236–Cys3248, Cys3250–Cys3259, and Cys3296–Cys3346. A BNR 16 repeat occupies 3363 to 3374 (QYSVNNGITWHV). Residues Asn3412 and Asn3439 are each glycosylated (N-linked (GlcNAc...) asparagine).

This sequence belongs to the reelin family. As to quaternary structure, oligomer of disulfide-linked homodimers. Post-translationally, N-glycosylated and to a lesser extent also O-glycosylated. The major isoform 1 is neuron-specific. It is abundantly produced during brain ontogenesis by the Cajal-Retzius cells and other pioneer neurons located in the telencephalic marginal zone and by granule cells of the external granular layer of the cerebellum. Expression is located in deeper layers in the developing hippocampus and olfactory bulb, low levels of expression are also detected in the immature striatum. At early developmental stages, expressed also in hypothalamic differentiation fields, tectum and spinal cord. A moderate to low level of expression occurs in the septal area, striatal fields, habenular nuclei, some thalamic nuclei, particularly the lateral geniculate, the retina and some nuclei of the reticular formation in the central field of the medulla. Very low levels found in liver and kidney. No expression in radial glial cells, cortical plate, Purkinje cells and inferior olivary neurons. The minor isoform 2 is only expressed in non neuronal cells. The minor isoform 3 is found in the same cells as isoform 1, but is almost undetectable in retina and brain stem.

The protein localises to the secreted. The protein resides in the extracellular space. It is found in the extracellular matrix. In terms of biological role, extracellular matrix serine protease secreted by pioneer neurons that plays a role in layering of neurons in the cerebral cortex and cerebellum by coordinating cell positioning during neurodevelopment. Regulates microtubule function in neurons and neuronal migration. Binding to the extracellular domains of lipoprotein receptors VLDLR and LRP8/APOER2 induces tyrosine phosphorylation of DAB1 and modulation of TAU phosphorylation. Affects migration of sympathetic preganglionic neurons in the spinal cord, where it seems to act as a barrier to neuronal migration. Enzymatic activity is important for the modulation of cell adhesion. The sequence is that of Reelin (Reln) from Mus musculus (Mouse).